Reading from the N-terminus, the 253-residue chain is NAD-dependent protein deacetylase (253 aa).

A Deacetylase sirtuin-type domain is found at 3–253 (APSLSSGVEQ…GETLGPFVGN (251 aa)). A29, T33, F40, R41, Q106, I108, D109, and H126 together coordinate NAD(+). Nicotinamide is bound at residue F40. Residues I108 and D109 each contribute to the nicotinamide site. H126 functions as the Proton acceptor in the catalytic mechanism. Residues C134, C137, C159, and C162 each coordinate Zn(2+). Residues S200, S201, N225, D242, and I243 each contribute to the NAD(+) site.

This sequence belongs to the sirtuin family. Class U subfamily. Zn(2+) is required as a cofactor.

It localises to the cytoplasm. It carries out the reaction N(6)-acetyl-L-lysyl-[protein] + NAD(+) + H2O = 2''-O-acetyl-ADP-D-ribose + nicotinamide + L-lysyl-[protein]. In terms of biological role, NAD-dependent protein deacetylase which modulates the activities of several enzymes which are inactive in their acetylated form. In Rhodopseudomonas palustris (strain ATCC BAA-98 / CGA009), this protein is NAD-dependent protein deacetylase.